Reading from the N-terminus, the 410-residue chain is Exopolygalacturonase (410 aa).

The first 22 residues, 1-22 (MACTNNAMRALFLLVLFCIVHG), serve as a signal peptide directing secretion. Residue Asn89 is glycosylated (N-linked (GlcNAc...) asparagine). PbH1 repeat units lie at residues 192-218 (CKDM…HMGD), 219-240 (SSGI…SIGP), 242-262 (TSKV…SIGS), 272-293 (VTDI…RIKA), and 337-377 (ASKV…TMDD). Asp233 functions as the Proton donor in the catalytic mechanism. A disulfide bond links Cys235 and Cys252. Asn246 carries N-linked (GlcNAc...) asparagine glycosylation. The active site involves His256. N-linked (GlcNAc...) asparagine glycosylation occurs at Asn349. A disulfide bridge links Cys364 with Cys370. N-linked (GlcNAc...) asparagine glycosylation is present at Asn387. A disulfide bridge connects residues Cys393 and Cys409.

It belongs to the glycosyl hydrolase 28 family. Pollen.

The protein resides in the secreted. It is found in the cell wall. It carries out the reaction [(1-&gt;4)-alpha-D-galacturonosyl](n) + H2O = alpha-D-galacturonate + [(1-&gt;4)-alpha-D-galacturonosyl](n-1). Its function is as follows. May function in depolymerizing pectin during pollen development, germination, and tube growth. Acts as an exo-polygalacturonase. This chain is Exopolygalacturonase (PG1), found in Zea mays (Maize).